The chain runs to 338 residues: MGVNLSSILIKHETSLKDNSGSIVSVDAYNIIYQFLSSIRGDDGEPLKDSNGNITSHLSGIFYRTSNLLENNIKPVYVFDGKPFHLKSETLRERSLIKEKNIMKLEEAIASNDDAKIRSLSSRINYITDDIVNESKTLLNLMGLPYVQAPSEGEAQASYMTLKGDVNAVVSQDYDCLLFGAKRILRNFTVYGRRRIAGTSRTINVNPEIIDLNENLSNLGISREQLIYIGILTGTDFNPGVKGIGAKTALSLIKKYNDIYSVIKIKNIGIDNLDEIIEFFMNPPHNDYEIKFNEPDFDGIIDFLCGKHNFSESRVNETLEKISRNYKKDHQSSLDRFF.

The tract at residues 1–98 is N-domain; sequence MGVNLSSILI…ETLRERSLIK (98 aa). Aspartate 27, aspartate 80, glutamate 152, glutamate 154, aspartate 173, aspartate 175, and aspartate 236 together coordinate Mg(2+). The interval 116 to 257 is I-domain; sequence KIRSLSSRIN…TALSLIKKYN (142 aa). The segment at 330–338 is interaction with PCNA; the sequence is HQSSLDRFF.

It belongs to the XPG/RAD2 endonuclease family. FEN1 subfamily. In terms of assembly, interacts with PCNA. PCNA stimulates the nuclease activity without altering cleavage specificity. Requires Mg(2+) as cofactor.

Structure-specific nuclease with 5'-flap endonuclease and 5'-3' exonuclease activities involved in DNA replication and repair. During DNA replication, cleaves the 5'-overhanging flap structure that is generated by displacement synthesis when DNA polymerase encounters the 5'-end of a downstream Okazaki fragment. Binds the unpaired 3'-DNA end and kinks the DNA to facilitate 5' cleavage specificity. Cleaves one nucleotide into the double-stranded DNA from the junction in flap DNA, leaving a nick for ligation. Also involved in the base excision repair (BER) pathway. Acts as a genome stabilization factor that prevents flaps from equilibrating into structures that lead to duplications and deletions. Also possesses 5'-3' exonuclease activity on nicked or gapped double-stranded DNA. In Picrophilus torridus (strain ATCC 700027 / DSM 9790 / JCM 10055 / NBRC 100828 / KAW 2/3), this protein is Flap endonuclease 1.